A 431-amino-acid chain; its full sequence is Glutamate-1-semialdehyde 2,1-aminomutase (431 aa).

Position 265 is an N6-(pyridoxal phosphate)lysine (Lys265).

It belongs to the class-III pyridoxal-phosphate-dependent aminotransferase family. HemL subfamily. Homodimer. Requires pyridoxal 5'-phosphate as cofactor.

It is found in the cytoplasm. It carries out the reaction (S)-4-amino-5-oxopentanoate = 5-aminolevulinate. It participates in porphyrin-containing compound metabolism; protoporphyrin-IX biosynthesis; 5-aminolevulinate from L-glutamyl-tRNA(Glu): step 2/2. This Aliivibrio salmonicida (strain LFI1238) (Vibrio salmonicida (strain LFI1238)) protein is Glutamate-1-semialdehyde 2,1-aminomutase.